The chain runs to 269 residues: Energy-coupling factor transporter ATP-binding protein EcfA1 (269 aa).

The ABC transporter domain occupies 8–242 (IVFKNVSFQY…AEELTTIGLD (235 aa)). 42–49 (GHNGSGKS) contributes to the ATP binding site.

It belongs to the ABC transporter superfamily. Energy-coupling factor EcfA family. As to quaternary structure, forms a stable energy-coupling factor (ECF) transporter complex composed of 2 membrane-embedded substrate-binding proteins (S component), 2 ATP-binding proteins (A component) and 2 transmembrane proteins (T component).

The protein resides in the cell membrane. ATP-binding (A) component of a common energy-coupling factor (ECF) ABC-transporter complex. Unlike classic ABC transporters this ECF transporter provides the energy necessary to transport a number of different substrates. The protein is Energy-coupling factor transporter ATP-binding protein EcfA1 of Staphylococcus aureus (strain MRSA252).